We begin with the raw amino-acid sequence, 272 residues long: NAD kinase (272 aa).

The active-site Proton acceptor is aspartate 62. Residues 62 to 63 (DG), arginine 67, 129 to 130 (NE), arginine 140, lysine 157, aspartate 159, isoleucine 167, 170 to 175 (SSYSSS), alanine 194, and glutamine 229 contribute to the NAD(+) site.

Belongs to the NAD kinase family. A divalent metal cation serves as cofactor.

It is found in the cytoplasm. It catalyses the reaction NAD(+) + ATP = ADP + NADP(+) + H(+). Functionally, involved in the regulation of the intracellular balance of NAD and NADP, and is a key enzyme in the biosynthesis of NADP. Catalyzes specifically the phosphorylation on 2'-hydroxyl of the adenosine moiety of NAD to yield NADP. The polypeptide is NAD kinase (Thermoplasma acidophilum (strain ATCC 25905 / DSM 1728 / JCM 9062 / NBRC 15155 / AMRC-C165)).